A 283-amino-acid polypeptide reads, in one-letter code: Fructose-1,6-bisphosphatase class 1 (283 aa).

Residues glutamate 67, aspartate 86, leucine 88, and aspartate 89 each coordinate Mg(2+). Substrate is bound by residues aspartate 89 to serine 92, tyrosine 195, and lysine 225. Glutamate 231 is a Mg(2+) binding site.

It belongs to the FBPase class 1 family. Homotetramer. Mg(2+) serves as cofactor.

It is found in the cytoplasm. The catalysed reaction is beta-D-fructose 1,6-bisphosphate + H2O = beta-D-fructose 6-phosphate + phosphate. Its pathway is carbohydrate biosynthesis; gluconeogenesis. This is Fructose-1,6-bisphosphatase class 1 from Natronomonas pharaonis (strain ATCC 35678 / DSM 2160 / CIP 103997 / JCM 8858 / NBRC 14720 / NCIMB 2260 / Gabara) (Halobacterium pharaonis).